The sequence spans 154 residues: MNVIEGKMTQDGIKVGIVVARFNEFITSKLLGGAKDGLVRHDVPEENIDVAWVPGAFEIPLIAKKMAKSRKYDAIICLGAVIRGATSHYDYVCNEVSKGIASVSLESEIPVMFGVVTTENIEQAIERAGTKAGNKGYDCALGAIEMINLVRQIG.

5-amino-6-(D-ribitylamino)uracil-binding positions include Phe-22, 56 to 58, and 80 to 82; these read AFE and AVI. 85–86 contributes to the (2S)-2-hydroxy-3-oxobutyl phosphate binding site; that stretch reads AT. Catalysis depends on His-88, which acts as the Proton donor. 5-amino-6-(D-ribitylamino)uracil is bound at residue Phe-113. Arg-127 contributes to the (2S)-2-hydroxy-3-oxobutyl phosphate binding site.

Belongs to the DMRL synthase family.

The catalysed reaction is (2S)-2-hydroxy-3-oxobutyl phosphate + 5-amino-6-(D-ribitylamino)uracil = 6,7-dimethyl-8-(1-D-ribityl)lumazine + phosphate + 2 H2O + H(+). The protein operates within cofactor biosynthesis; riboflavin biosynthesis; riboflavin from 2-hydroxy-3-oxobutyl phosphate and 5-amino-6-(D-ribitylamino)uracil: step 1/2. Its function is as follows. Catalyzes the formation of 6,7-dimethyl-8-ribityllumazine by condensation of 5-amino-6-(D-ribitylamino)uracil with 3,4-dihydroxy-2-butanone 4-phosphate. This is the penultimate step in the biosynthesis of riboflavin. This chain is 6,7-dimethyl-8-ribityllumazine synthase, found in Agathobacter rectalis (strain ATCC 33656 / DSM 3377 / JCM 17463 / KCTC 5835 / VPI 0990) (Eubacterium rectale).